The primary structure comprises 151 residues: Neuroglobin (151 aa).

The 149-residue stretch at 1-149 folds into the Globin domain; that stretch reads MERPEPELIR…VVQAMSRGWD (149 aa). H64 and H96 together coordinate heme b.

The protein belongs to the globin family. In terms of assembly, monomer. Homodimer and homotetramer; disulfide-linked. Mainly monomeric but also detected as part of homodimers and homotetramers. Interacts with 14-3-3 proteins; regulates the phosphorylation of NGB. Could interact (ferrous form) with G-alpha(i) proteins (GTP-bound form). In terms of processing, phosphorylated during hypoxia by ERK1/ERK2. Phosphorylation regulates the heme pocket hexacoordination preventing the association of His-64 with the heme metal center. Thereby, promotes the access of dioxygen and nitrite to the heme and stimulates the nitrite reductase activity. Phosphorylation during hypoxia is stabilized by 14-3-3 proteins.

The protein localises to the cytoplasm. The protein resides in the cytosol. It localises to the mitochondrion matrix. The enzyme catalyses Fe(III)-heme b-[protein] + nitric oxide + H2O = Fe(II)-heme b-[protein] + nitrite + 2 H(+). In terms of biological role, monomeric globin with a bis-histidyl six-coordinate heme-iron atom through which it can bind dioxygen, carbon monoxide and nitric oxide. Could help transport oxygen and increase its availability to the metabolically active neuronal tissues, though its low quantity in tissues as well as its high affinity for dioxygen, which may limit its oxygen-releasing ability, argue against it. The ferrous/deoxygenated form exhibits a nitrite reductase activity and it could produce nitric oxide which in turn inhibits cellular respiration in response to hypoxia. In its ferrous/deoxygenated state, it may also exhibit GDI (Guanine nucleotide Dissociation Inhibitor) activity toward heterotrimeric G-alpha proteins, thereby regulating signal transduction to facilitate neuroprotective responses in the wake of hypoxia and associated oxidative stress. The protein is Neuroglobin of Macaca mulatta (Rhesus macaque).